A 1437-amino-acid polypeptide reads, in one-letter code: Protein CC2D2B (1437 aa).

In Homo sapiens (Human), this protein is Protein CC2D2B.